Here is a 494-residue protein sequence, read N- to C-terminus: GTPase Der (494 aa).

EngA-type G domains follow at residues 2-164 and 235-407; these read KKIA…PEED and IKIS…KNYS. Residues 8 to 15, 55 to 59, 116 to 119, 241 to 248, 288 to 292, and 352 to 355 each bind GTP; these read GRPNVGKS, DTGGL, NKID, GRTNVGKS, DTAGL, and NKWD. In terms of domain architecture, KH-like spans 408–492; sequence QHIKTSELNV…PVLFKAKKRG (85 aa).

This sequence belongs to the TRAFAC class TrmE-Era-EngA-EngB-Septin-like GTPase superfamily. EngA (Der) GTPase family. As to quaternary structure, associates with the 50S ribosomal subunit.

In terms of biological role, GTPase that plays an essential role in the late steps of ribosome biogenesis. This Sulfurimonas denitrificans (strain ATCC 33889 / DSM 1251) (Thiomicrospira denitrificans (strain ATCC 33889 / DSM 1251)) protein is GTPase Der.